The following is a 1012-amino-acid chain: Axonemal dynein light chain domain-containing protein 1 (1012 aa).

Low complexity predominate over residues 1–17 (MSLPKTPSTPLNSTSTS). Residues 1 to 34 (MSLPKTPSTPLNSTSTSESKKLKVSVAKEGTRGL) form a disordered region. Coiled coils occupy residues 317–402 (QRIL…IWSS), 447–486 (EDLALLQKLTQKWRNLVNKLKQEVEQMEESTSETLKIVKD), and 572–597 (SERQYMEEIIKNIQKLYKEYEIRING). Residues 841 to 854 (PEIDESFKEDEEES) are compositionally biased toward acidic residues. 2 disordered regions span residues 841 to 879 (PEIDESFKEDEEESKEDRKLQEENKERAEEQPSTSTEKE) and 963 to 1012 (LEEL…KKGH). 2 stretches are compositionally biased toward basic and acidic residues: residues 855-879 (KEDRKLQEENKERAEEQPSTSTEKE) and 963-987 (LEELVMTSRKESKEEKENQDEREVK). Positions 988-997 (EEEEQQEEEE) are enriched in acidic residues.

Highly expressed in testis. Highly expressed in the round and late spermatids.

The protein localises to the cytoplasm. In terms of biological role, may be essential for spermiogenesis and male fertility probably by regulating the manchette dynamics, spermatid head shaping and sperm flagellum assembly. This is Axonemal dynein light chain domain-containing protein 1 from Homo sapiens (Human).